The sequence spans 177 residues: Adenine phosphoribosyltransferase (177 aa).

This sequence belongs to the purine/pyrimidine phosphoribosyltransferase family. As to quaternary structure, homodimer.

The protein localises to the cytoplasm. It catalyses the reaction AMP + diphosphate = 5-phospho-alpha-D-ribose 1-diphosphate + adenine. It functions in the pathway purine metabolism; AMP biosynthesis via salvage pathway; AMP from adenine: step 1/1. Its function is as follows. Catalyzes a salvage reaction resulting in the formation of AMP, that is energically less costly than de novo synthesis. The protein is Adenine phosphoribosyltransferase of Chlorobium phaeobacteroides (strain BS1).